The primary structure comprises 339 residues: MTQEREKAIELALSQIEKQFGKGAIMRLGADEALPDIDAIPTGALSLDIALGVGGVPRGRVIEIYGPESSGKTTLALHIAAEAQKLGGIAAFVDAEHALDIGYARKLGVRTDDLLVSQPDTGEQALEIAEMLVRSGAVDVLVIDSVAALVPKAEIEGEMGDSHVGLQARLMSQALRKLTGIISKSNCCVIFINQIRMKIGVMFGSPETTTGGNALKFYASVRLDIRKIATLKQGDAVIGSRTKVKVVKNKVAPPFREVEFDIYYGEGISRLGDLLDLAVDRKIIDKSGAWFSYGSDRIGQGRENSRNFLKEHPEMVAEIEDKIYETAGIPRKGGKEEAA.

66–73 lines the ATP pocket; the sequence is GPESSGKT.

This sequence belongs to the RecA family.

It localises to the cytoplasm. Can catalyze the hydrolysis of ATP in the presence of single-stranded DNA, the ATP-dependent uptake of single-stranded DNA by duplex DNA, and the ATP-dependent hybridization of homologous single-stranded DNAs. It interacts with LexA causing its activation and leading to its autocatalytic cleavage. The polypeptide is Protein RecA (Geobacter metallireducens (strain ATCC 53774 / DSM 7210 / GS-15)).